A 698-amino-acid chain; its full sequence is Epithelial sodium channel subunit alpha (698 aa).

The interval 1–70 (MLDHTRAPEL…SAPRQPTEEE (70 aa)) is disordered. Residues 1-110 (MLDHTRAPEL…CSKHNRMKTA (110 aa)) lie on the Cytoplasmic side of the membrane. Residues 111–131 (FWAVLWLCTFGMMYWQFALLF) traverse the membrane as a helical segment. Over 132 to 589 (EEYLSYPVSL…SQWSLWFGSS (458 aa)) the chain is Extracellular. Disulfide bonds link Cys158–Cys332, Cys256–Cys263, and Cys309–Cys316. Asn190 carries N-linked (GlcNAc...) asparagine glycosylation. Residues 200–270 (RRRSSRDLLG…SDCFYQTYSS (71 aa)) form a gating release of inhibition by proteolysis (GRIP); protease-sensitive region that is responsible for the proteolytic activation of the channel region. Residues 213–243 (HPLQRLRTPPPPYSGRTARSGSSSVRDNNPQ) form a disordered region. Positions 229 to 243 (TARSGSSSVRDNNPQ) are enriched in polar residues. N-linked (GlcNAc...) asparagine glycosylation is present at Asn259. N-linked (GlcNAc...) asparagine glycans are attached at residues Asn320, Asn339, and Asn424. 7 disulfide bridges follow: Cys421/Cys506, Cys443/Cys483, Cys443/Cys502, Cys447/Cys498, Cys456/Cys483, Cys456/Cys506, and Cys458/Cys472. Asn538 is a glycosylation site (N-linked (GlcNAc...) asparagine). Residues 590–610 (VLSVVEMAELIFDLLVITLLM) traverse the membrane as a helical segment. The Cytoplasmic segment spans residues 611–698 (LLRRFRSRYW…DCSACALAAL (88 aa)). Positions 637–663 (ASSFPSRFCPHPTSPPPSLPQQGMTPP) are disordered. The PY motif; recruits WW domain-containing proteins and is thereby required for ubiquitination and inhibition of the channel by NEDD4 and NEDD4L motif lies at 669-673 (PPPAY).

It belongs to the amiloride-sensitive sodium channel (TC 1.A.6) family. SCNN1A subfamily. As to quaternary structure, heterotrimer; containing an alpha/SCNN1A, a beta/SCNN1B and a gamma/SCNN1G subunit. Interacts with WWP1 (via WW domains). Interacts with WWP2 (via WW domains); inhibits the channel. Interacts with BPIFA1; the interaction is indirect via SCNN1B and inhibits the proteolytic processing of SCNN1A and SCNN1G and the activation of ENaC. Interacts with the full-length immature form of PCSK9 (pro-PCSK9). In terms of processing, ubiquitinated. Can be ubiquitinated at multiple sites and undergo monoubiquitination and polyubiquitination. Ubiquitination by NEDD4 or NEDD4L inhibits the ENaC channel through endocytosis, intracellular retention and degradation of its individual subunits. Post-translationally, N-glycosylated. ENaC is activated through the proteolytic maturation of its subunits. Furin cleaves the SCNN1A subunit, which results in a stepwise increase in the open probability of the channel due to the release of an inhibitory tract. BPIFA1, which is recruited by the SCNN1B subunit, prevents the proteolytic activation of ENaC. Detected in kidney, lung and testis (at protein level). In the testis, detected within the seminiferous tubules but not in the interstitial cells (at protein level).

It localises to the apical cell membrane. The protein localises to the cell projection. The protein resides in the cilium. It is found in the cytoplasmic granule. Its subcellular location is the cytoplasm. It localises to the cytoplasmic vesicle. The protein localises to the secretory vesicle. The protein resides in the acrosome. It is found in the flagellum. The enzyme catalyses Na(+)(in) = Na(+)(out). Originally identified and characterized by its inhibition by the diuretic drug amiloride. Its function is as follows. This is one of the three pore-forming subunits of the heterotrimeric epithelial sodium channel (ENaC), a critical regulator of sodium balance and fluid homeostasis. ENaC operates in epithelial tissues, where it mediates the electrodiffusion of sodium ions from extracellular fluid through the apical membrane of cells, with water following osmotically. It plays a key role in maintaining sodium homeostasis through electrogenic sodium reabsorption in the kidneys. Additionally, ENaC is essential for airway surface liquid homeostasis, which is crucial for proper mucus clearance. In Rattus norvegicus (Rat), this protein is Epithelial sodium channel subunit alpha.